The primary structure comprises 317 residues: 17-beta-hydroxysteroid dehydrogenase type 6 (317 aa).

Residues 1 to 17 (MWFYLVTLVGLYYLLRW) form the signal peptide. Position 33–57 (33–57 (FITGCDSGFGNLLARQLDRRGMRVL)) interacts with NAD(+). Asn161 carries an N-linked (GlcNAc...) asparagine glycan. Position 164 (Ser164) interacts with substrate. The active-site Proton acceptor is the Tyr176.

Belongs to the short-chain dehydrogenases/reductases (SDR) family. Detected in prostate, liver and kidney.

The protein resides in the microsome membrane. It is found in the endoplasmic reticulum membrane. The enzyme catalyses all-trans-retinol--[retinol-binding protein] + NAD(+) = all-trans-retinal--[retinol-binding protein] + NADH + H(+). It catalyses the reaction all-trans-retinol + NAD(+) = all-trans-retinal + NADH + H(+). It carries out the reaction androsterone + NAD(+) = 5alpha-androstan-3,17-dione + NADH + H(+). The catalysed reaction is testosterone + NAD(+) = androst-4-ene-3,17-dione + NADH + H(+). The enzyme catalyses 5alpha-androstane-3alpha,17beta-diol + NAD(+) = 17beta-hydroxy-5alpha-androstan-3-one + NADH + H(+). It catalyses the reaction 17beta-estradiol + NAD(+) = estrone + NADH + H(+). It carries out the reaction 17beta-estradiol + NADP(+) = estrone + NADPH + H(+). The catalysed reaction is 3alpha-hydroxy-5alpha-pregnan-20-one + NAD(+) = 5alpha-pregnane-3,20-dione + NADH + H(+). The enzyme catalyses 5alpha-androstane-3beta,17beta-diol + NAD(+) = 17beta-hydroxy-5alpha-androstan-3-one + NADH + H(+). It catalyses the reaction 3beta-hydroxy-5alpha-androstan-17-one + NAD(+) = 5alpha-androstan-3,17-dione + NADH + H(+). Competitively inhibited by 9-cis-retinoic acid and 13-cis-retinoic acid. Its function is as follows. NAD-dependent oxidoreductase with broad substrate specificity that shows both oxidative and reductive activity (in vitro). Has retinol dehydrogenase activity towards all-trans-retinol (in vitro). Has 17-beta-hydroxysteroid dehydrogenase activity towards various steroids (in vitro). Converts 5-alpha-androstan-3-alpha,17-beta-diol to androsterone and estradiol to estrone (in vitro). Has 3-alpha-hydroxysteroid dehydrogenase activity towards androsterone (in vitro). The protein is 17-beta-hydroxysteroid dehydrogenase type 6 (Hsd17b6) of Rattus norvegicus (Rat).